Consider the following 258-residue polypeptide: Tryptophan synthase alpha chain (258 aa).

Residues E46 and D57 each act as proton acceptor in the active site.

Belongs to the TrpA family. Tetramer of two alpha and two beta chains.

The catalysed reaction is (1S,2R)-1-C-(indol-3-yl)glycerol 3-phosphate + L-serine = D-glyceraldehyde 3-phosphate + L-tryptophan + H2O. Its pathway is amino-acid biosynthesis; L-tryptophan biosynthesis; L-tryptophan from chorismate: step 5/5. Functionally, the alpha subunit is responsible for the aldol cleavage of indoleglycerol phosphate to indole and glyceraldehyde 3-phosphate. The chain is Tryptophan synthase alpha chain from Phocaeicola vulgatus (strain ATCC 8482 / DSM 1447 / JCM 5826 / CCUG 4940 / NBRC 14291 / NCTC 11154) (Bacteroides vulgatus).